We begin with the raw amino-acid sequence, 151 residues long: Ribosome maturation factor RimP (151 aa).

This sequence belongs to the RimP family.

The protein resides in the cytoplasm. Its function is as follows. Required for maturation of 30S ribosomal subunits. This Shewanella halifaxensis (strain HAW-EB4) protein is Ribosome maturation factor RimP.